A 275-amino-acid chain; its full sequence is Putative carbamate hydrolase RutD (275 aa).

Belongs to the AB hydrolase superfamily. Hydrolase RutD family.

The enzyme catalyses carbamate + 2 H(+) = NH4(+) + CO2. In terms of biological role, involved in pyrimidine catabolism. May facilitate the hydrolysis of carbamate, a reaction that can also occur spontaneously. This chain is Putative carbamate hydrolase RutD, found in Escherichia coli O6:H1 (strain CFT073 / ATCC 700928 / UPEC).